Here is a 200-residue protein sequence, read N- to C-terminus: MELQVVGANALTVSETTFGREFNEALIHQVVVAYAAGARQGSRAQKTRAEVSGSGKKPWRQKGTGRARSGDIKSPIWRSGGVTFAAKPQDHSQKVNKKMYRGAIKSILSELVRQDRLVVVEKFEIDAPKTKVLVQKLKDMALTDALIITASLDENLFLAARNLYKVDVRDVQAIDPVSLIAFDKVVVTVDAVKQIEEMFA.

Residues 43–71 (RAQKTRAEVSGSGKKPWRQKGTGRARSGD) form a disordered region.

The protein belongs to the universal ribosomal protein uL4 family. In terms of assembly, part of the 50S ribosomal subunit.

One of the primary rRNA binding proteins, this protein initially binds near the 5'-end of the 23S rRNA. It is important during the early stages of 50S assembly. It makes multiple contacts with different domains of the 23S rRNA in the assembled 50S subunit and ribosome. In terms of biological role, forms part of the polypeptide exit tunnel. The polypeptide is Large ribosomal subunit protein uL4 (Histophilus somni (strain 129Pt) (Haemophilus somnus)).